The chain runs to 343 residues: MAKRQLNRRQNWRIEKIQGERAARAAKRESSAVEALEGGDLGPEQTGLVIAHFGVQVEVEAREGETAGQVFRCYLRANLPALVTGDQVVWRAGNQGIGVIVAQLPRSTELCRPDSRGQLKPVAANVDMIVIVFAPMPEPHANLIDRYLVAAEHAGIRPLLLLNKADLIDEQNAPALNALLAVYRQLGYPLLEVSAHHGDGMEQLQALLDGRISVFVGQSGVGKSSLVNSLLPEVETRVGPLSEFSGQGTHTTTTARLFHFPGGGELIDSPGIREFGLGHVSRADVEAGFIEFNDLLGTCRFRDCKHDREPGCALLKALEDGRIQQQRMNSYRSILASLPDNSY.

The region spanning 116–275 is the CP-type G domain; it reads RGQLKPVAAN…LIDSPGIREF (160 aa). GTP is bound by residues 163–166 and 217–225; these read NKAD and GQSGVGKSS. Zn(2+)-binding residues include C299, C304, H306, and C312.

The protein belongs to the TRAFAC class YlqF/YawG GTPase family. RsgA subfamily. Monomer. Associates with 30S ribosomal subunit, binds 16S rRNA. The cofactor is Zn(2+).

The protein resides in the cytoplasm. Functionally, one of several proteins that assist in the late maturation steps of the functional core of the 30S ribosomal subunit. Helps release RbfA from mature subunits. May play a role in the assembly of ribosomal proteins into the subunit. Circularly permuted GTPase that catalyzes slow GTP hydrolysis, GTPase activity is stimulated by the 30S ribosomal subunit. The protein is Small ribosomal subunit biogenesis GTPase RsgA of Pseudomonas fluorescens (strain ATCC BAA-477 / NRRL B-23932 / Pf-5).